We begin with the raw amino-acid sequence, 555 residues long: Glutamine--tRNA ligase (555 aa).

The 'HIGH' region motif lies at 34–44 (PEPNGYLHIGH). ATP-binding positions include 35–37 (EPN) and 41–47 (HIGHAKS). D67 and Y212 together coordinate L-glutamine. Residues T231, 261-262 (RL), and 269-271 (MSK) each bind ATP. The 'KMSKS' region signature appears at 268-272 (VMSKR). Residues 317-324 (TKQDNTIE) form an interaction with tRNA region.

It belongs to the class-I aminoacyl-tRNA synthetase family. As to quaternary structure, monomer.

The protein localises to the cytoplasm. The enzyme catalyses tRNA(Gln) + L-glutamine + ATP = L-glutaminyl-tRNA(Gln) + AMP + diphosphate. In Enterobacter sp. (strain 638), this protein is Glutamine--tRNA ligase.